Consider the following 508-residue polypeptide: 3-octaprenyl-4-hydroxybenzoate carboxy-lyase (508 aa).

Asparagine 178 contacts Mn(2+). Prenylated FMN-binding positions include 181–183 (IYR), 195–197 (RWL), and 200–201 (RG). Mn(2+) is bound at residue glutamate 244. Catalysis depends on aspartate 303, which acts as the Proton donor.

The protein belongs to the UbiD family. As to quaternary structure, homohexamer. It depends on prenylated FMN as a cofactor. Mn(2+) is required as a cofactor.

It is found in the cell membrane. It catalyses the reaction a 4-hydroxy-3-(all-trans-polyprenyl)benzoate + H(+) = a 2-(all-trans-polyprenyl)phenol + CO2. The protein operates within cofactor biosynthesis; ubiquinone biosynthesis. Catalyzes the decarboxylation of 3-octaprenyl-4-hydroxy benzoate to 2-octaprenylphenol, an intermediate step in ubiquinone biosynthesis. In Cupriavidus taiwanensis (strain DSM 17343 / BCRC 17206 / CCUG 44338 / CIP 107171 / LMG 19424 / R1) (Ralstonia taiwanensis (strain LMG 19424)), this protein is 3-octaprenyl-4-hydroxybenzoate carboxy-lyase.